A 557-amino-acid polypeptide reads, in one-letter code: Probable protein kinase UbiB (557 aa).

One can recognise a Protein kinase domain in the interval 121-509 (AFDTTPLASA…RKLQTRVVTA (389 aa)). Residues 127–135 (LASASIAQV) and K154 each bind ATP. Residue D289 is the Proton acceptor of the active site. Transmembrane regions (helical) follow at residues 506–526 (VVTAITGSGLLVVAAVLYGLH) and 535–555 (VPVWSWISGGAGSAALLIAWL).

The protein belongs to the ABC1 family. UbiB subfamily.

The protein localises to the cell inner membrane. It functions in the pathway cofactor biosynthesis; ubiquinone biosynthesis [regulation]. Its function is as follows. Is probably a protein kinase regulator of UbiI activity which is involved in aerobic coenzyme Q (ubiquinone) biosynthesis. The protein is Probable protein kinase UbiB of Xanthomonas campestris pv. campestris (strain 8004).